The primary structure comprises 414 residues: 2,3-diketo-5-methylthiopentyl-1-phosphate enolase (414 aa).

Lys-99 functions as the Proton acceptor in the catalytic mechanism. Substrate-binding positions include Lys-148, 174–177 (KDDE), His-265, Gly-338, and 360–361 (GG). Mg(2+) is bound by residues Lys-174, Asp-176, and Glu-177. Lys-174 carries the N6-carboxylysine modification.

This sequence belongs to the RuBisCO large chain family. Type IV subfamily. In terms of assembly, homodimer. The cofactor is Mg(2+).

It catalyses the reaction 5-methylsulfanyl-2,3-dioxopentyl phosphate = 2-hydroxy-5-methylsulfanyl-3-oxopent-1-enyl phosphate. It functions in the pathway amino-acid biosynthesis; L-methionine biosynthesis via salvage pathway; L-methionine from S-methyl-5-thio-alpha-D-ribose 1-phosphate: step 3/6. In terms of biological role, catalyzes the enolization of 2,3-diketo-5-methylthiopentyl-1-phosphate (DK-MTP-1-P) into 2-hydroxy-3-keto-5-methylthiopentenyl-1-phosphate (HK-MTPenyl-1-P). In Bacillus cereus (strain ATCC 14579 / DSM 31 / CCUG 7414 / JCM 2152 / NBRC 15305 / NCIMB 9373 / NCTC 2599 / NRRL B-3711), this protein is 2,3-diketo-5-methylthiopentyl-1-phosphate enolase.